The primary structure comprises 384 residues: Small ribosomal subunit protein mS31 (384 aa).

The N-terminal 54 residues, 1–54 (MLHRIPAFLRPRPFSGLPLSCGNRDVSVAVLPAAQSGAVRTENNIQRHFCTSRS), are a transit peptide targeting the mitochondrion. Positions 101 to 136 (TANVKTPKPRGRKPSASLEATVDRLQKAPEDPPKKR) are disordered. Positions 121 to 136 (TVDRLQKAPEDPPKKR) are enriched in basic and acidic residues.

Belongs to the mitochondrion-specific ribosomal protein mS31 family. In terms of assembly, component of the mitochondrial ribosome small subunit (28S) which comprises a 12S rRNA and about 30 distinct proteins.

Its subcellular location is the mitochondrion. This Mus musculus (Mouse) protein is Small ribosomal subunit protein mS31 (Mrps31).